The following is an 864-amino-acid chain: Leukocyte tyrosine kinase receptor (864 aa).

Residues 1-16 (MGCWGQLLVWFGAAGA) form the signal peptide. The Extracellular portion of the chain corresponds to 17 to 424 (ILCSSPGSQE…CMDLHKPPGP (408 aa)). Residues 30-40 (RSSPLPLASPS) are compositionally biased toward low complexity. The disordered stretch occupies residues 30–64 (RSSPLPLASPSPRDPKVSAPPSILEPASPLNSPGT). Intrachain disulfides connect Cys73–Cys86 and Cys168–Cys179. Residues 239–297 (YLRPRDRGRTQASPEKLENRSEAPGSGGRGGAAGGGGGWTSRAPSPQAGRSLQEGAEGG) are disordered. The segment covering 241–259 (RPRDRGRTQASPEKLENRS) has biased composition (basic and acidic residues). Asn257 is a glycosylation site (N-linked (GlcNAc...) asparagine). Gly residues predominate over residues 263–277 (GSGGRGGAAGGGGGW). A disulfide bridge links Cys300 with Cys322. N-linked (GlcNAc...) asparagine glycans are attached at residues Asn380 and Asn412. A helical transmembrane segment spans residues 425–449 (LVLMVAVVATSTLSLLMVCGVLILV). The Cytoplasmic portion of the chain corresponds to 450 to 864 (KQKKWQGLQE…QNLWNPTYRS (415 aa)). One can recognise a Protein kinase domain in the interval 510–786 (VTLLRALGHG…LQYCTQDPDV (277 aa)). ATP contacts are provided by residues 516-524 (LGHGAFGEV) and Lys544. Residue Asp643 is the Proton acceptor of the active site. At Tyr676 the chain carries Phosphotyrosine; by autocatalysis. Disordered regions lie at residues 790–830 (LLPM…KLKS) and 842–864 (SGLKPLKSRGLQPQNLWNPTYRS). The segment covering 852-864 (LQPQNLWNPTYRS) has biased composition (polar residues).

This sequence belongs to the protein kinase superfamily. Tyr protein kinase family. Insulin receptor subfamily. In terms of assembly, homodimer; homodimerizes following ligand-binding. Part of a complex including LTK, TNK2 and GRB2, in which GRB2 promotes LTK recruitment by TNK2. In terms of processing, phosphorylated at tyrosine residues by autocatalysis, which activates kinase activity. Expressed in non-hematopoietic cell lines and T- and B-cell lines.

The protein resides in the cell membrane. The catalysed reaction is L-tyrosyl-[protein] + ATP = O-phospho-L-tyrosyl-[protein] + ADP + H(+). Activated by ligand-binding, leading to homodimerization and autophosphorylation. In terms of biological role, receptor with a tyrosine-protein kinase activity. Following activation by ALKAL1 or ALKAL2 ligands at the cell surface, transduces an extracellular signal into an intracellular response. Ligand-binding to the extracellular domain induces tyrosine kinase activation, leading to activation of the mitogen-activated protein kinase (MAPK) pathway. Phosphorylates almost exclusively at the first tyrosine of the Y-x-x-x-Y-Y motif. The exact function of this protein is not known; studies with chimeric proteins demonstrate its ability to promote growth and specifically neurite outgrowth, and cell survival. Involved in regulation of the secretory pathway involving endoplasmic reticulum (ER) export sites (ERESs) and ER to Golgi transport. In Homo sapiens (Human), this protein is Leukocyte tyrosine kinase receptor.